The primary structure comprises 127 residues: Large ribosomal subunit protein bL17 (127 aa).

The protein belongs to the bacterial ribosomal protein bL17 family. In terms of assembly, part of the 50S ribosomal subunit. Contacts protein L32.

This Stenotrophomonas maltophilia (strain K279a) protein is Large ribosomal subunit protein bL17.